We begin with the raw amino-acid sequence, 2209 residues long: MWNDIELLTNDDTGSGYLSVGSRKEHGTALYQVDLLVKISSEKASLNPKIQACSLSDGFIIVADQSVILLDSICRSLQLHLVFDTEVDVVGLCQEGKFLLVGERSGNLHLIHVTSKQTLLTNAFVQKANDENRRTYQNLVIEKDGSNEGTYYMLLLTYSGFFCITNLQLLKIQQAIENVDFSTAKKLQGQIKSSFISTENYHTLGCLSLVAGDLASEVPVIIGGTGNCAFSKWEPDSSKKGMTVKNLIDAEIIKGAKKFQLIDNLLFVLDTDNVLSLWDIYTLTPVWNWPSLHVEEFLLTTEADSPSSVTWQGITNLKLIALTASANKKMKNLMVYSLPTMEILYSLEVSSVSSLVQTGISTDTIYLLEGVCKNDPKLSEDSVSVLVLRCLTEALPENRLSRLLHKHRFAEAESFAIQFGLDVELVYKVKSNHILEKLALSSVDASEQTEWQQLVDDAKENLHKIQDDEFVVNYCLKAQWITYETTQEMLNYAKTRLLKKEDKTALIYSDGLKEVLRAHAKLTTFYGAFGPEKFSGSSWIEFLNNEDDLKDIFLQLKEGNLVCAQYLWLRHRANFESRFDVKMLESLLNSMSASVSLQKLCPWFKNDVIPFVRRTVPEGQIILAKWLEQAARNLELTDKANWPENGLQLAEIFFTAEKTDELGLASSWHWISLKDYQNTEEVCQLRTLVNNLRELITLHRKYNCKLALSDFEKENTTTIVFRMFDKVLAPELIPSILEKFIRVYMREHDLQEEELLLLYIEDLLNRCSSKSTSLFETAWEAKAMAVIACLSDTDLIFDAVLKIMYAAVVPWSAAVEQLVKQHLEMDHPKVKLLQESYKLMEMKKLLRGYGIREVNLLNKEIMRVVRYILKQDVPSSLEDALKVAQAFMLSDDEIYSLRIIDLIDREQGEDCLLLLKSLPPAEAEKTAERVIIWARLALQEEPDHSKEGKAWRMSVAKTSVDILKILCDIQKDNLQKKDECEEMLKLFKEVASLQENFEVFLSFEDYSNSSLVADLREQHIKAHEVAQAKHKPGSTPEPIAAEVRSPSMESKLHRQALALQMSKQELEAELTLRALKDGNIKTALKKCSDLFKYHCNADTGKLLFLTCQKLCQMLADNVPVTVPVGLNLPSMIHDLASQAATICSPDFLLDALELCKHTLMAVELSRQCQMDDCGILMKASFGTHKDPYEEWSYSDFFSEDGIVLESQMVLPVIYELISSLVPLAESKRYPLESTSLPYCSLNEGDGLVLPVINSISALLQNLQESSQWELALRFVVGSFGTCLQHSVSNFMNATLSEKLFGETTLVKSRHVVMELKEKAVIFIRENATTLLHKVFNCRLVDLDLALGYCTLLPQKDVFENLWKLIDKAWQNYDKILAISLVGSELASLYQEIEMGLKFRELSTDAQWGIRLGKLGISFQPVFRQHFLTKKDLIKALVENIDMDTSLILEYCSTFQLDCDAVLQLFIETLLHNTNAGQGQGDASMDSAKRRHPKLLAKALEMVPLLTSTKDLVISLSGILHKLDPYDYEMIEVVLKVIERADEKITNININQALSILKHLKSYRRISPPVDLEYQYMLEHVITLPSAAQTRLPFHLIFFGTAQNFWKILSTELSEESFPTLLLISKLMKFSLDTLYVSTAKHVFEKKLKPKLLKLTQAKSSTLINKEITKITQTIESCLLSIVNPEWAVAIAISLAQDIPEGSFKISALKFCLYLAERWLQNIPSQDEKREKAEALLKKLHIQYRRSGTEAVLIAHKLNTEEYLRVIGKPAHLIVSLYEHPSINQRIQNSSGTDYPDIHAAAKEIAEVNEINLEKVWDMLLEKWLCPSTKPGEKPSELFELQEDEALRRVQYLLLSRPIDYSSRMLFVFATSTTTTLGMHQLTFAHRTRALQCLFYLADKETIESLFKKPIEEVKSYLRCITFLASFETLNIPITYELFCSSPKEGMIKGLWKNHSHESMAVRLVTELCLEYKIYDLQLWNGLLQKLLGFNMIPYLRKVLKAISSIHSLWQVPYFSKAWQRVIQIPLLSASCPLSPDQLSDCSESLIAVLECPVSGDLDLIGVARQYIQLELPAFALACLMLMPHSEKRHQQIKNFLGSCDPQVILKQLEEHMNTGQLAGFSHQIRSLILNNIINKKEFGILAKTKYFQMLKMHAMNTNNITELVNYLANDLSLDEASVLITEYSKHCGKPVPPDTAPCEILKMFLSGLS.

Phosphothreonine; by TTK is present on T13. Position 15 is a phosphoserine; by TTK (S15). T1035 carries the post-translational modification Phosphothreonine. Position 1045 is a phosphoserine (S1045).

As to quaternary structure, interacts with ZW10; the interaction is required for stable association with the kinetochore. Component of the RZZ complex composed of KNTC1/ROD, ZW10 and ZWILCH; in the complex interacts directly with ZWILCH. In terms of tissue distribution, high expression in testis.

The protein resides in the cytoplasm. Its subcellular location is the nucleus. It is found in the chromosome. The protein localises to the centromere. It localises to the kinetochore. The protein resides in the cytoskeleton. Its subcellular location is the spindle. Its function is as follows. Essential component of the mitotic checkpoint, which prevents cells from prematurely exiting mitosis. Required for the assembly of the dynein-dynactin and MAD1-MAD2 complexes onto kinetochores. Its function related to the spindle assembly machinery is proposed to depend on its association in the mitotic RZZ complex. The polypeptide is Kinetochore-associated protein 1 (KNTC1) (Homo sapiens (Human)).